The chain runs to 150 residues: Large ribosomal subunit protein bL9 (150 aa).

The protein belongs to the bacterial ribosomal protein bL9 family.

In terms of biological role, binds to the 23S rRNA. In Vibrio campbellii (strain ATCC BAA-1116), this protein is Large ribosomal subunit protein bL9.